Consider the following 268-residue polypeptide: Peptide transport system ATP-binding protein SapF (268 aa).

In terms of domain architecture, ABC transporter spans 6–251 (LEVRNLSKTF…PLHELTKRLI (246 aa)). An ATP-binding site is contributed by 47–54 (GENGSGKS).

Belongs to the ABC transporter superfamily.

The protein resides in the cell inner membrane. Involved in a peptide intake transport system that plays a role in the resistance to antimicrobial peptides. The polypeptide is Peptide transport system ATP-binding protein SapF (sapF) (Escherichia coli O6:H1 (strain CFT073 / ATCC 700928 / UPEC)).